Reading from the N-terminus, the 92-residue chain is MATRLTDTEIQAQLSQFPEWSKVDNKIQRRFKFKNFIEAIDFVNKLVEPAEAADHHPDIEISYNKVTVNLTTHDAGGLTQKDFDLAGTFDQL.

The protein belongs to the pterin-4-alpha-carbinolamine dehydratase family.

The enzyme catalyses (4aS,6R)-4a-hydroxy-L-erythro-5,6,7,8-tetrahydrobiopterin = (6R)-L-erythro-6,7-dihydrobiopterin + H2O. In Picosynechococcus sp. (strain ATCC 27264 / PCC 7002 / PR-6) (Agmenellum quadruplicatum), this protein is Putative pterin-4-alpha-carbinolamine dehydratase.